Reading from the N-terminus, the 573-residue chain is Glutamate--tRNA ligase (573 aa).

The 'HIGH' region signature appears at 107–117 (PNPDGAFHLGN).

Belongs to the class-I aminoacyl-tRNA synthetase family. Glutamate--tRNA ligase type 2 subfamily.

The protein localises to the cytoplasm. It catalyses the reaction tRNA(Glu) + L-glutamate + ATP = L-glutamyl-tRNA(Glu) + AMP + diphosphate. Its function is as follows. Catalyzes the attachment of glutamate to tRNA(Glu) in a two-step reaction: glutamate is first activated by ATP to form Glu-AMP and then transferred to the acceptor end of tRNA(Glu). The polypeptide is Glutamate--tRNA ligase (Thermococcus kodakarensis (strain ATCC BAA-918 / JCM 12380 / KOD1) (Pyrococcus kodakaraensis (strain KOD1))).